A 382-amino-acid polypeptide reads, in one-letter code: Homeobox protein bagpipe (382 aa).

Disordered stretches follow at residues 27-66 (NDIL…SKSP), 144-178 (TSND…KKRS), and 314-382 (QPIP…VEID). A compositionally biased stretch (basic and acidic residues) spans 48–62 (EPEKLKPSSDRERSI). Over residues 158 to 170 (SSPSESPLSHDGS) the composition is skewed to low complexity. Positions 175 to 234 (KKRSRAAFSHAQVFELERRFAQQRYLSGPERSEMAKSLRLTETQVKIWFQNRRYKTKRKQ) form a DNA-binding region, homeobox. Over residues 321–335 (QSSSFVTASSASSSP) the composition is skewed to low complexity. Residues 373–382 (EDVDENVEID) show a composition bias toward acidic residues.

The protein belongs to the NK-3 homeobox family. Is expressed in a segmented pattern in visceral muscle and in a subset of cardiac muscles. Loss of activity results in segmental gaps in midgut visceral muscle.

Its subcellular location is the nucleus. In terms of biological role, involved in the determination of cell fates in the dorsal mesoderm. This Drosophila melanogaster (Fruit fly) protein is Homeobox protein bagpipe (bap).